The chain runs to 238 residues: Phosphoribosylaminoimidazole-succinocarboxamide synthase (238 aa).

This sequence belongs to the SAICAR synthetase family.

It catalyses the reaction 5-amino-1-(5-phospho-D-ribosyl)imidazole-4-carboxylate + L-aspartate + ATP = (2S)-2-[5-amino-1-(5-phospho-beta-D-ribosyl)imidazole-4-carboxamido]succinate + ADP + phosphate + 2 H(+). It functions in the pathway purine metabolism; IMP biosynthesis via de novo pathway; 5-amino-1-(5-phospho-D-ribosyl)imidazole-4-carboxamide from 5-amino-1-(5-phospho-D-ribosyl)imidazole-4-carboxylate: step 1/2. The chain is Phosphoribosylaminoimidazole-succinocarboxamide synthase from Chlorobium phaeovibrioides (strain DSM 265 / 1930) (Prosthecochloris vibrioformis (strain DSM 265)).